A 160-amino-acid chain; its full sequence is Ribosome-binding factor A (160 aa).

Residues 112 to 122 show a composition bias toward basic and acidic residues; that stretch reads KARQSDEKVRE. Positions 112-160 are disordered; it reads KARQSDEKVREASAGATYAGEADPYRKPDEDETDTEGAVEADETDDTAK. Residues 141 to 160 are compositionally biased toward acidic residues; that stretch reads EDETDTEGAVEADETDDTAK.

This sequence belongs to the RbfA family. Monomer. Binds 30S ribosomal subunits, but not 50S ribosomal subunits or 70S ribosomes.

Its subcellular location is the cytoplasm. One of several proteins that assist in the late maturation steps of the functional core of the 30S ribosomal subunit. Associates with free 30S ribosomal subunits (but not with 30S subunits that are part of 70S ribosomes or polysomes). Required for efficient processing of 16S rRNA. May interact with the 5'-terminal helix region of 16S rRNA. This is Ribosome-binding factor A from Streptomyces coelicolor (strain ATCC BAA-471 / A3(2) / M145).